The sequence spans 207 residues: Guanylate kinase (207 aa).

The Guanylate kinase-like domain maps to 4–184 (GTLYIVSAPS…ALADLHTIIR (181 aa)). An ATP-binding site is contributed by 11-18 (APSGAGKS).

The protein belongs to the guanylate kinase family.

Its subcellular location is the cytoplasm. It catalyses the reaction GMP + ATP = GDP + ADP. In terms of biological role, essential for recycling GMP and indirectly, cGMP. In Photorhabdus laumondii subsp. laumondii (strain DSM 15139 / CIP 105565 / TT01) (Photorhabdus luminescens subsp. laumondii), this protein is Guanylate kinase.